The sequence spans 276 residues: Hydroxyethylthiazole kinase (276 aa).

Met48 provides a ligand contact to substrate. The ATP site is built by Arg124 and Thr175. Gly202 contacts substrate.

The protein belongs to the Thz kinase family. The cofactor is Mg(2+).

It catalyses the reaction 5-(2-hydroxyethyl)-4-methylthiazole + ATP = 4-methyl-5-(2-phosphooxyethyl)-thiazole + ADP + H(+). Its pathway is cofactor biosynthesis; thiamine diphosphate biosynthesis; 4-methyl-5-(2-phosphoethyl)-thiazole from 5-(2-hydroxyethyl)-4-methylthiazole: step 1/1. Functionally, catalyzes the phosphorylation of the hydroxyl group of 4-methyl-5-beta-hydroxyethylthiazole (THZ). The chain is Hydroxyethylthiazole kinase from Clostridium beijerinckii (strain ATCC 51743 / NCIMB 8052) (Clostridium acetobutylicum).